The primary structure comprises 119 residues: Large ribosomal subunit protein uL18 (119 aa).

It belongs to the universal ribosomal protein uL18 family. As to quaternary structure, part of the 50S ribosomal subunit; part of the 5S rRNA/L5/L18/L25 subcomplex. Contacts the 5S and 23S rRNAs.

Its function is as follows. This is one of the proteins that bind and probably mediate the attachment of the 5S RNA into the large ribosomal subunit, where it forms part of the central protuberance. The polypeptide is Large ribosomal subunit protein uL18 (Cupriavidus metallidurans (strain ATCC 43123 / DSM 2839 / NBRC 102507 / CH34) (Ralstonia metallidurans)).